A 372-amino-acid polypeptide reads, in one-letter code: GDSL esterase/lipase At5g45910 (372 aa).

The N-terminal stretch at 1 to 19 (MRINMLFIVAFSFLVSVRS) is a signal peptide. The active-site Nucleophile is Ser-37. Residues Asn-66, Asn-101, and Asn-137 are each glycosylated (N-linked (GlcNAc...) asparagine). Active-site residues include Asp-345 and His-348.

Belongs to the 'GDSL' lipolytic enzyme family.

The protein resides in the secreted. This is GDSL esterase/lipase At5g45910 from Arabidopsis thaliana (Mouse-ear cress).